The chain runs to 245 residues: tRNA (guanine-N(1)-)-methyltransferase (245 aa).

S-adenosyl-L-methionine contacts are provided by residues G114 and 134-139; that span reads IGDYIL.

It belongs to the RNA methyltransferase TrmD family. Homodimer.

Its subcellular location is the cytoplasm. It carries out the reaction guanosine(37) in tRNA + S-adenosyl-L-methionine = N(1)-methylguanosine(37) in tRNA + S-adenosyl-L-homocysteine + H(+). Its function is as follows. Specifically methylates guanosine-37 in various tRNAs. The sequence is that of tRNA (guanine-N(1)-)-methyltransferase from Listeria monocytogenes serotype 4b (strain CLIP80459).